The following is a 312-amino-acid chain: Methionyl-tRNA formyltransferase (312 aa).

(6S)-5,6,7,8-tetrahydrofolate is bound at residue serine 109–proline 112.

Belongs to the Fmt family.

It carries out the reaction L-methionyl-tRNA(fMet) + (6R)-10-formyltetrahydrofolate = N-formyl-L-methionyl-tRNA(fMet) + (6S)-5,6,7,8-tetrahydrofolate + H(+). Its function is as follows. Attaches a formyl group to the free amino group of methionyl-tRNA(fMet). The formyl group appears to play a dual role in the initiator identity of N-formylmethionyl-tRNA by promoting its recognition by IF2 and preventing the misappropriation of this tRNA by the elongation apparatus. The chain is Methionyl-tRNA formyltransferase from Anaeromyxobacter sp. (strain K).